Reading from the N-terminus, the 513-residue chain is Histidine ammonia-lyase (513 aa).

A cross-link (5-imidazolinone (Ala-Gly)) is located at residues 144 to 146 (ASG). The residue at position 145 (S145) is a 2,3-didehydroalanine (Ser).

Belongs to the PAL/histidase family. In terms of processing, contains an active site 4-methylidene-imidazol-5-one (MIO), which is formed autocatalytically by cyclization and dehydration of residues Ala-Ser-Gly.

The protein resides in the cytoplasm. It carries out the reaction L-histidine = trans-urocanate + NH4(+). It functions in the pathway amino-acid degradation; L-histidine degradation into L-glutamate; N-formimidoyl-L-glutamate from L-histidine: step 1/3. This Streptococcus gordonii (strain Challis / ATCC 35105 / BCRC 15272 / CH1 / DL1 / V288) protein is Histidine ammonia-lyase.